The following is a 604-amino-acid chain: Glutamine--fructose-6-phosphate aminotransferase [isomerizing] (604 aa).

C2 (nucleophile; for GATase activity) is an active-site residue. Positions 2–219 constitute a Glutamine amidotransferase type-2 domain; that stretch reads CGIMGAVSER…EGDSACVTTQ (218 aa). 2 consecutive SIS domains span residues 279-427 and 454-594; these read LRAS…DNRA and LASL…VDQP. Residue K599 is the For Fru-6P isomerization activity of the active site.

In terms of assembly, homodimer.

The protein localises to the cytoplasm. The enzyme catalyses D-fructose 6-phosphate + L-glutamine = D-glucosamine 6-phosphate + L-glutamate. In terms of biological role, catalyzes the first step in hexosamine metabolism, converting fructose-6P into glucosamine-6P using glutamine as a nitrogen source. This is Glutamine--fructose-6-phosphate aminotransferase [isomerizing] from Legionella pneumophila (strain Paris).